The following is a 301-amino-acid chain: Leucine-rich repeat-containing protein 30 (301 aa).

LRR repeat units follow at residues 72–93 (EVQK…VGKL), 95–116 (RIVV…VSLL), 118–139 (CLKV…LSLC), 141–163 (KLEV…ADLS), 164–185 (RLRK…VFSL), 187–208 (ELIF…IQHL), 210–231 (SLQI…LCLV), 233–254 (SLEL…LHLL), and 265–287 (MDKG…VEGG).

This is Leucine-rich repeat-containing protein 30 (LRRC30) from Homo sapiens (Human).